Here is a 262-residue protein sequence, read N- to C-terminus: Small ribosomal subunit protein mS23 (262 aa).

Residues Ser-211–Ala-262 are disordered. Residues Ser-242–Val-251 are compositionally biased toward polar residues.

This sequence belongs to the mitochondrion-specific ribosomal protein mS23 family. As to quaternary structure, component of the mitochondrial small ribosomal subunit.

It is found in the mitochondrion. In Phaeosphaeria nodorum (strain SN15 / ATCC MYA-4574 / FGSC 10173) (Glume blotch fungus), this protein is Small ribosomal subunit protein mS23 (RSM25).